A 120-amino-acid chain; its full sequence is Glycine cleavage system H protein (120 aa).

Residues I17–R99 enclose the Lipoyl-binding domain. N6-lipoyllysine is present on K58.

Belongs to the GcvH family. The glycine cleavage system is composed of four proteins: P, T, L and H. (R)-lipoate serves as cofactor.

Functionally, the glycine cleavage system catalyzes the degradation of glycine. The H protein shuttles the methylamine group of glycine from the P protein to the T protein. In Methylobacterium nodulans (strain LMG 21967 / CNCM I-2342 / ORS 2060), this protein is Glycine cleavage system H protein.